Consider the following 172-residue polypeptide: C-phycocyanin beta chain (172 aa).

Asparagine 72 bears the N4-methylasparagine mark. (2R,3E)-phycocyanobilin-binding residues include cysteine 82 and cysteine 153.

Belongs to the phycobiliprotein family. Heterodimer of an alpha and a beta subunit, which further assembles into trimers and the trimers into hexamers. The basic functional unit of phycobiliproteins is a ring-shaped hexamer formed from two back-to-back trimers contacting via the alpha chain subunits. The trimers are composed of alpha/beta subunit heterodimers arranged around a three-fold axis of symmetry. The phycoerythrins also contain a gamma subunit which is located in the center of the hexamer. In terms of processing, contains two covalently linked bilin chromophores.

The protein localises to the plastid. Its subcellular location is the chloroplast thylakoid membrane. Functionally, light-harvesting photosynthetic bile pigment-protein from the phycobiliprotein complex (phycobilisome, PBS). Phycocyanin is the major phycobiliprotein in the PBS rod. This Aglaothamnion neglectum (Red alga) protein is C-phycocyanin beta chain (cpcB).